The primary structure comprises 131 residues: Methyl-coenzyme M reductase operon protein D (131 aa).

As to quaternary structure, MCR is composed of three subunits: alpha, beta, and gamma. The function of proteins C and D is not known.

This is Methyl-coenzyme M reductase operon protein D (mcrD) from Methanothermus fervidus.